Consider the following 728-residue polypeptide: Bacteriophytochrome (728 aa).

Cysteine 12 is an a tetrapyrrole binding site. Positions 17–495 (IHVPGAIQPH…RLDLMELCLN (479 aa)) are chromophore binding domain. One can recognise a GAF domain in the interval 139-303 (DTASLLSNVT…IFSQVCSAIV (165 aa)). One can recognise a Histidine kinase domain in the interval 510–721 (VLGHDLRNPL…TFCLRLPVRQ (212 aa)). Histidine 513 bears the Phosphohistidine; by autocatalysis mark.

It in the N-terminal section; belongs to the phytochrome family. Contains one covalently linked tetrapyrrole chromophore.

It catalyses the reaction ATP + protein L-histidine = ADP + protein N-phospho-L-histidine.. Functionally, photoreceptor which exists in two forms that are reversibly interconvertible by light: the R form that absorbs maximally in the red region of the spectrum and the FR form that absorbs maximally in the far-red region. This is Bacteriophytochrome (bphP) from Pseudomonas aeruginosa (strain ATCC 15692 / DSM 22644 / CIP 104116 / JCM 14847 / LMG 12228 / 1C / PRS 101 / PAO1).